The following is a 443-amino-acid chain: Enolase (443 aa).

Residue Gln167 participates in (2R)-2-phosphoglycerate binding. Residue Glu209 is the Proton donor of the active site. Mg(2+)-binding residues include Asp246, Glu291, and Asp318. Positions 343, 372, 373, and 394 each coordinate (2R)-2-phosphoglycerate. Lys343 acts as the Proton acceptor in catalysis.

This sequence belongs to the enolase family. Component of the RNA degradosome, a multiprotein complex involved in RNA processing and mRNA degradation. Requires Mg(2+) as cofactor.

The protein resides in the cytoplasm. It is found in the secreted. Its subcellular location is the cell surface. The enzyme catalyses (2R)-2-phosphoglycerate = phosphoenolpyruvate + H2O. Its pathway is carbohydrate degradation; glycolysis; pyruvate from D-glyceraldehyde 3-phosphate: step 4/5. Catalyzes the reversible conversion of 2-phosphoglycerate (2-PG) into phosphoenolpyruvate (PEP). It is essential for the degradation of carbohydrates via glycolysis. The chain is Enolase from Wigglesworthia glossinidia brevipalpis.